Reading from the N-terminus, the 319-residue chain is Ferrochelatase (319 aa).

Fe cation-binding residues include His192 and Glu271.

Belongs to the ferrochelatase family.

The protein resides in the cytoplasm. It carries out the reaction heme b + 2 H(+) = protoporphyrin IX + Fe(2+). It functions in the pathway porphyrin-containing compound metabolism; protoheme biosynthesis; protoheme from protoporphyrin-IX: step 1/1. Catalyzes the ferrous insertion into protoporphyrin IX. The protein is Ferrochelatase of Geotalea uraniireducens (strain Rf4) (Geobacter uraniireducens).